A 417-amino-acid polypeptide reads, in one-letter code: L-rhamnose isomerase (417 aa).

His261, Asp293, and Asp295 together coordinate Mn(2+).

It belongs to the rhamnose isomerase family. Requires Mn(2+) as cofactor.

It is found in the cytoplasm. The enzyme catalyses L-rhamnopyranose = L-rhamnulose. It functions in the pathway carbohydrate degradation; L-rhamnose degradation; glycerone phosphate from L-rhamnose: step 1/3. Its function is as follows. Catalyzes the interconversion of L-rhamnose and L-rhamnulose. The polypeptide is L-rhamnose isomerase (Oceanobacillus iheyensis (strain DSM 14371 / CIP 107618 / JCM 11309 / KCTC 3954 / HTE831)).